We begin with the raw amino-acid sequence, 324 residues long: NADH-cytochrome b5 reductase 1 (324 aa).

Residues 49–69 form a helical membrane-spanning segment; sequence LNIVLAFVVGLIGSVVVLLYF. Residues 81–184 enclose the FAD-binding FR-type domain; the sequence is TQWQQYRLME…KGPKGQMRYA (104 aa). FAD contacts are provided by residues 164-179 and 190-222; these read GSMK…GPKG and HIGM…QIDF.

The protein belongs to the flavoprotein pyridine nucleotide cytochrome reductase family. As to quaternary structure, monomer. Component of the 2-(3-amino-3-carboxypropyl)histidine synthase complex composed of DPH1, DPH2, DPH3 and a NADH-dependent reductase, predominantly CBR1. FAD serves as cofactor.

It localises to the mitochondrion outer membrane. The catalysed reaction is 2 Fe(III)-[cytochrome b5] + NADH = 2 Fe(II)-[cytochrome b5] + NAD(+) + H(+). It carries out the reaction 2 Fe(3+)-[Dph3] + NADH = 2 Fe(2+)-[Dph3] + NAD(+) + H(+). The protein operates within protein modification; peptidyl-diphthamide biosynthesis. Functionally, NADH-dependent reductase for DPH3 and cytochrome b5. Required for the first step of diphthamide biosynthesis, a post-translational modification of histidine which occurs in elongation factor 2. DPH1 and DPH2 transfer a 3-amino-3-carboxypropyl (ACP) group from S-adenosyl-L-methionine (SAM) to a histidine residue, the reaction is assisted by a reduction system comprising DPH3 and a NADH-dependent reductase, predominantly CBR1. By reducing DPH3, also involved in the formation of the tRNA wobble base modification mcm5s 2U (5-methoxycarbonylmethyl-2-thiouridine), mediated by the elongator complex. The cytochrome b5/NADH cytochrome b5 reductase electron transfer system supports the catalytic activity of several sterol biosynthetic enzymes. The protein is NADH-cytochrome b5 reductase 1 (CBR1) of Mycosarcoma maydis (Corn smut fungus).